The primary structure comprises 218 residues: Hypoxanthine-guanine phosphoribosyltransferase (218 aa).

K69 is a binding site for GMP. An N6-acetyllysine modification is found at K103. K115 is covalently cross-linked (Glycyl lysine isopeptide (Lys-Gly) (interchain with G-Cter in SUMO1); alternate). A Glycyl lysine isopeptide (Lys-Gly) (interchain with G-Cter in SUMO2); alternate cross-link involves residue K115. GMP is bound by residues 134–142, K166, 186–188, and D194; these read EDIIDTGKT and KFV. D138 acts as the Proton acceptor in catalysis. T142 carries the phosphothreonine modification. Mg(2+) is bound at residue D194.

This sequence belongs to the purine/pyrimidine phosphoribosyltransferase family. In terms of assembly, homotetramer. Mg(2+) is required as a cofactor.

It localises to the cytoplasm. The enzyme catalyses IMP + diphosphate = hypoxanthine + 5-phospho-alpha-D-ribose 1-diphosphate. It catalyses the reaction GMP + diphosphate = guanine + 5-phospho-alpha-D-ribose 1-diphosphate. Its pathway is purine metabolism; IMP biosynthesis via salvage pathway; IMP from hypoxanthine: step 1/1. Its function is as follows. Converts guanine to guanosine monophosphate, and hypoxanthine to inosine monophosphate. Transfers the 5-phosphoribosyl group from 5-phosphoribosylpyrophosphate onto the purine. Plays a central role in the generation of purine nucleotides through the purine salvage pathway. This chain is Hypoxanthine-guanine phosphoribosyltransferase (Hprt1), found in Rattus norvegicus (Rat).